Consider the following 411-residue polypeptide: MSQSKGTVVLAYSGGLDTSCILVWLKEQGFDVIAYLANIGQNEDFEEARKKAVNLGAKKVYIEDIRQQFVEEYIWPAVQANAIYEDRYLLGTSLARPCIAKKQVEIAKKEAAEYVSHGATGKGNDQIRFELTCYSLYPEVKIIAPWRMPEFYNRFRGRSDLMEYAKKHNISVPVTPKSPWSMDENLMHISYEGGILENPKNHAPPGLYLKTKDPATSPDEPDILEIEFKKGVPVKVTNTKNKTQHSSSLALFCYLNEVAGKHGVGRIDIVENRFIGMKSRGIYETPAGTILYQAHLDIEAFTMDREMRKIKQQLSQRFAEQIYNGFWYSPECEFVRSCISKSQEMVEGKVLVSVLKGQVYVLGREAPHSLYNEELVSMDVQGDYDPADACGFIKINAVRLKEYHRLQKNKK.

Residues 11-19 and A37 each bind ATP; that span reads AYSGGLDTS. Residues Y88 and S93 each contribute to the L-citrulline site. 116–124 serves as a coordination point for ATP; the sequence is SHGATGKGN. The L-aspartate site is built by T120, N124, and D125. Residue N124 coordinates L-citrulline. L-citrulline contacts are provided by R128, S181, S190, E271, and Y283.

It belongs to the argininosuccinate synthase family. As to quaternary structure, homotetramer.

The protein localises to the cytoplasm. It is found in the cytosol. The catalysed reaction is L-citrulline + L-aspartate + ATP = 2-(N(omega)-L-arginino)succinate + AMP + diphosphate + H(+). Its pathway is amino-acid biosynthesis; L-arginine biosynthesis; L-arginine from L-ornithine and carbamoyl phosphate: step 2/3. It participates in nitrogen metabolism; urea cycle; (N(omega)-L-arginino)succinate from L-aspartate and L-citrulline: step 1/1. Functionally, one of the enzymes of the urea cycle, the metabolic pathway transforming neurotoxic amonia produced by protein catabolism into inocuous urea in the liver of ureotelic animals. Catalyzes the formation of arginosuccinate from aspartate, citrulline and ATP and together with ASL it is responsible for the biosynthesis of arginine in most body tissues. The protein is Argininosuccinate synthase of Xenopus laevis (African clawed frog).